The chain runs to 443 residues: Ribosomal protein uS12 methylthiotransferase RimO (443 aa).

The MTTase N-terminal domain occupies 8 to 118 (PKVGFVSLGC…VVNAVHEVVP (111 aa)). Cysteine 17, cysteine 53, cysteine 82, cysteine 151, cysteine 155, and cysteine 158 together coordinate [4Fe-4S] cluster. The 239-residue stretch at 137-375 (LTPRHYAYLK…MAHQQAISTA (239 aa)) folds into the Radical SAM core domain. Positions 378–443 (QLRIGKEIEV…DEYDMWAEPI (66 aa)) constitute a TRAM domain.

This sequence belongs to the methylthiotransferase family. RimO subfamily. [4Fe-4S] cluster is required as a cofactor.

Its subcellular location is the cytoplasm. It carries out the reaction L-aspartate(89)-[ribosomal protein uS12]-hydrogen + (sulfur carrier)-SH + AH2 + 2 S-adenosyl-L-methionine = 3-methylsulfanyl-L-aspartate(89)-[ribosomal protein uS12]-hydrogen + (sulfur carrier)-H + 5'-deoxyadenosine + L-methionine + A + S-adenosyl-L-homocysteine + 2 H(+). Functionally, catalyzes the methylthiolation of an aspartic acid residue of ribosomal protein uS12. The protein is Ribosomal protein uS12 methylthiotransferase RimO of Pseudomonas putida (strain GB-1).